Consider the following 155-residue polypeptide: Ribosome maturation factor RimP (155 aa).

The protein belongs to the RimP family.

It localises to the cytoplasm. Its function is as follows. Required for maturation of 30S ribosomal subunits. This chain is Ribosome maturation factor RimP, found in Listeria monocytogenes serotype 4b (strain CLIP80459).